The following is a 603-amino-acid chain: MPVRQLPEQVVNRIAAGEVVERPASVVKELVENAIDAGASRIDVFTDGGGRRRIGITDDGSGMTAKDLALAVERHATSKLDDEDLLQIRTLGFRGEALPSIGSVARLSITTRHAGEPHAWALTVEGGEKSEIMPAALAHGTRVEVNDLFYATPARLKFLKTDRTEAEAIREVVRRLAMARPDVAFTLAGEERAPVTWAAALPGAAGRLTRLGDILGAEFRSHAIEVHAEREGIVVSGYAAAPALTKANALGQYLFVNGRPVRDKLILGAVRAAYSDYLPRDRHPVLALFVTLDPREVDANVHPAKTEVRFRNAGLVRALIVHGLKEALAREGRRTAANSGESALSSFRPAFTPRPASWDWRASPSAPVAPMPSFDGAAAPAFTERAQAAFDVGAPSADVRFETQPVSDLVDRPLGAARTQIHETYIVSQTRDGLIIVDQHAAHERIVYEGLKASLAANGVQRQILLIPEIVEMDEATVERLLERSDELASFGLAIESFGPGAVAVRETPSLLGKTNAGGLLRDLSEHMAEWDEALPLERRLMHVAATMACHGSVRAGRRLRPEEMNALLREMEETPNSGQCNHGRPTYVELKLSDVEKLFGRR.

Belongs to the DNA mismatch repair MutL/HexB family.

In terms of biological role, this protein is involved in the repair of mismatches in DNA. It is required for dam-dependent methyl-directed DNA mismatch repair. May act as a 'molecular matchmaker', a protein that promotes the formation of a stable complex between two or more DNA-binding proteins in an ATP-dependent manner without itself being part of a final effector complex. The chain is DNA mismatch repair protein MutL from Bradyrhizobium diazoefficiens (strain JCM 10833 / BCRC 13528 / IAM 13628 / NBRC 14792 / USDA 110).